Here is a 353-residue protein sequence, read N- to C-terminus: Putative transport protein YrrI (353 aa).

8 helical membrane passes run 8-28 (LLLW…FFML), 37-57 (LVIK…YLLL), 77-97 (IYVL…PVLI), 165-185 (FLIA…IELM), 220-240 (LLVC…FGLP), 243-263 (LILG…PFIG), 269-289 (LIAM…VFIL), and 311-331 (VVIM…GMIL).

It belongs to the autoinducer-2 exporter (AI-2E) (TC 2.A.86) family.

The protein localises to the cell membrane. In Bacillus subtilis (strain 168), this protein is Putative transport protein YrrI (yrrI).